The primary structure comprises 97 residues: Small ribosomal subunit protein bS21 (97 aa).

The tract at residues 37 to 97 (EKPSVRKARE…APASSPTTTA (61 aa)) is disordered. Over residues 76 to 97 (RAVAPRRPAAAPAPASSPTTTA) the composition is skewed to low complexity.

It belongs to the bacterial ribosomal protein bS21 family.

The chain is Small ribosomal subunit protein bS21 from Methylobacterium sp. (strain 4-46).